Reading from the N-terminus, the 109-residue chain is MSEYKSVQKGSLKLKGVSLPSKKKKKKNKEMKRLEEQVLTSENEEGTKKAYVDKRTPAQMAFDKIQEKRQMERILKKASKTHKRRVEDFNRHLDTLTEHYDIPKVSWTK.

Residues 1–48 are disordered; that stretch reads MSEYKSVQKGSLKLKGVSLPSKKKKKKNKEMKRLEEQVLTSENEEGTK. Low complexity predominate over residues 9–20; the sequence is KGSLKLKGVSLP. Residues 21–30 are compositionally biased toward basic residues; it reads SKKKKKKNKE.

This sequence belongs to the FAM32 family.

It localises to the nucleus. In terms of biological role, may induce G2 arrest and apoptosis. May also increase cell sensitivity to apoptotic stimuli. This is Protein FAM32A-like (fam32al) from Danio rerio (Zebrafish).